A 277-amino-acid chain; its full sequence is Ubiquinone biosynthesis protein COQ4, mitochondrial (277 aa).

A mitochondrion-targeting transit peptide spans 1–14 (MLTKRALRTTDPYR). His-157, Asp-158, His-161, and Glu-173 together coordinate Zn(2+).

It belongs to the COQ4 family. In terms of assembly, component of a multi-subunit COQ enzyme complex, composed of at least COQ3, COQ4, COQ5, COQ6, COQ7 and COQ9. It depends on Zn(2+) as a cofactor.

It localises to the mitochondrion inner membrane. The enzyme catalyses a 4-hydroxy-3-methoxy-5-(all-trans-polyprenyl)benzoate + H(+) = a 2-methoxy-6-(all-trans-polyprenyl)phenol + CO2. The protein operates within cofactor biosynthesis; ubiquinone biosynthesis. Lyase that catalyzes the C1-decarboxylation of 4-hydroxy-3-methoxy-5-(all-trans-polyprenyl)benzoic acid into 2-methoxy-6-(all-trans-polyprenyl)phenol during ubiquinone biosynthesis. This Ajellomyces capsulatus (strain G186AR / H82 / ATCC MYA-2454 / RMSCC 2432) (Darling's disease fungus) protein is Ubiquinone biosynthesis protein COQ4, mitochondrial.